Reading from the N-terminus, the 367-residue chain is Cell-death-related nuclease 7 (367 aa).

A signal peptide spans 1–18 (MRLYFVLIFSVIFTTGNG). Residue N253 is glycosylated (N-linked (GlcNAc...) asparagine).

It belongs to the DNase II family.

This chain is Cell-death-related nuclease 7 (crn-7), found in Caenorhabditis elegans.